A 201-amino-acid polypeptide reads, in one-letter code: Superoxide dismutase [Mn] (201 aa).

Positions 27, 81, 163, and 167 each coordinate Mn(2+).

It belongs to the iron/manganese superoxide dismutase family. In terms of assembly, homodimer. Mn(2+) is required as a cofactor.

The protein localises to the secreted. The catalysed reaction is 2 superoxide + 2 H(+) = H2O2 + O2. In terms of biological role, destroys superoxide anion radicals which are normally produced within the cells and which are toxic to biological systems. The polypeptide is Superoxide dismutase [Mn] (sodA) (Streptococcus pyogenes serotype M18 (strain MGAS8232)).